The following is a 135-amino-acid chain: FK506-binding protein 2 (135 aa).

Positions 1–17 (MLLKSLFLLFLTAIAFA) are cleaved as a signal peptide. The PPIase FKBP-type domain occupies 40–127 (GDLISVHYEG…VFVAELVDIA (88 aa)). The Prevents secretion from ER signature appears at 132–135 (HDEL).

It belongs to the FKBP-type PPIase family. FKBP2 subfamily.

The protein localises to the endoplasmic reticulum. The catalysed reaction is [protein]-peptidylproline (omega=180) = [protein]-peptidylproline (omega=0). Its activity is regulated as follows. Inhibited by both FK506 and rapamycin. PPIases accelerate the folding of proteins. It catalyzes the cis-trans isomerization of proline imidic peptide bonds in oligopeptides. The protein is FK506-binding protein 2 (FPR2) of Debaryomyces hansenii (strain ATCC 36239 / CBS 767 / BCRC 21394 / JCM 1990 / NBRC 0083 / IGC 2968) (Yeast).